We begin with the raw amino-acid sequence, 120 residues long: Large ribosomal subunit protein bL20 (120 aa).

It belongs to the bacterial ribosomal protein bL20 family.

Binds directly to 23S ribosomal RNA and is necessary for the in vitro assembly process of the 50S ribosomal subunit. It is not involved in the protein synthesizing functions of that subunit. This is Large ribosomal subunit protein bL20 from Pseudoalteromonas translucida (strain TAC 125).